Consider the following 208-residue polypeptide: Uracil phosphoribosyltransferase (208 aa).

5-phospho-alpha-D-ribose 1-diphosphate contacts are provided by residues Arg-78, Arg-103, and 130-138 (DPMLATGVS). Uracil-binding positions include Ile-193 and 198–200 (GDA). Asp-199 contacts 5-phospho-alpha-D-ribose 1-diphosphate.

Belongs to the UPRTase family. It depends on Mg(2+) as a cofactor.

The catalysed reaction is UMP + diphosphate = 5-phospho-alpha-D-ribose 1-diphosphate + uracil. Its pathway is pyrimidine metabolism; UMP biosynthesis via salvage pathway; UMP from uracil: step 1/1. Allosterically activated by GTP. Functionally, catalyzes the conversion of uracil and 5-phospho-alpha-D-ribose 1-diphosphate (PRPP) to UMP and diphosphate. The chain is Uracil phosphoribosyltransferase from Thermosipho africanus (strain TCF52B).